The chain runs to 247 residues: 1-(5-phosphoribosyl)-5-[(5-phosphoribosylamino)methylideneamino] imidazole-4-carboxamide isomerase (247 aa).

Asp8 acts as the Proton acceptor in catalysis. Asp129 (proton donor) is an active-site residue.

Belongs to the HisA/HisF family.

The protein localises to the cytoplasm. The enzyme catalyses 1-(5-phospho-beta-D-ribosyl)-5-[(5-phospho-beta-D-ribosylamino)methylideneamino]imidazole-4-carboxamide = 5-[(5-phospho-1-deoxy-D-ribulos-1-ylimino)methylamino]-1-(5-phospho-beta-D-ribosyl)imidazole-4-carboxamide. The protein operates within amino-acid biosynthesis; L-histidine biosynthesis; L-histidine from 5-phospho-alpha-D-ribose 1-diphosphate: step 4/9. This Solidesulfovibrio magneticus (strain ATCC 700980 / DSM 13731 / RS-1) (Desulfovibrio magneticus) protein is 1-(5-phosphoribosyl)-5-[(5-phosphoribosylamino)methylideneamino] imidazole-4-carboxamide isomerase.